The following is a 77-amino-acid chain: ATP synthase subunit c (77 aa).

A run of 2 helical transmembrane segments spans residues 10 to 30 (IAVALLIGFGAIGTAVGFGNM) and 57 to 77 (GLIDAVAMIGVGIAMVLLFVL).

It belongs to the ATPase C chain family. As to quaternary structure, F-type ATPases have 2 components, F(1) - the catalytic core - and F(0) - the membrane proton channel. F(1) has five subunits: alpha(3), beta(3), gamma(1), delta(1), epsilon(1). F(0) has three main subunits: a(1), b(2) and c(10-14). The alpha and beta chains form an alternating ring which encloses part of the gamma chain. F(1) is attached to F(0) by a central stalk formed by the gamma and epsilon chains, while a peripheral stalk is formed by the delta and b chains.

The protein resides in the cell inner membrane. In terms of biological role, f(1)F(0) ATP synthase produces ATP from ADP in the presence of a proton or sodium gradient. F-type ATPases consist of two structural domains, F(1) containing the extramembraneous catalytic core and F(0) containing the membrane proton channel, linked together by a central stalk and a peripheral stalk. During catalysis, ATP synthesis in the catalytic domain of F(1) is coupled via a rotary mechanism of the central stalk subunits to proton translocation. Functionally, key component of the F(0) channel; it plays a direct role in translocation across the membrane. A homomeric c-ring of between 10-14 subunits forms the central stalk rotor element with the F(1) delta and epsilon subunits. This chain is ATP synthase subunit c, found in Pseudoalteromonas translucida (strain TAC 125).